The sequence spans 216 residues: Ras-related protein RABE1c (216 aa).

22-29 is a binding site for GTP; sequence GDSGVGKS. Residues 44–52 carry the Effector region motif; sequence FITTIGIDF. Residues 70–74, 128–131, and 159–160 contribute to the GTP site; these read DTAGQ, NKAD, and SA. 2 S-geranylgeranyl cysteine lipidation sites follow: Cys213 and Cys214.

The protein belongs to the small GTPase superfamily. Rab family. Interacts with PI5K2.

Its subcellular location is the golgi apparatus membrane. The protein resides in the cell membrane. Its function is as follows. Involved in membrane trafficking from the Golgi to the plasma membrane. The chain is Ras-related protein RABE1c (RABE1C) from Arabidopsis thaliana (Mouse-ear cress).